A 344-amino-acid chain; its full sequence is Arginine N-succinyltransferase (344 aa).

Residue L125 participates in succinyl-CoA binding. H229 serves as the catalytic Proton donor.

Belongs to the arginine N-succinyltransferase family.

It catalyses the reaction succinyl-CoA + L-arginine = N(2)-succinyl-L-arginine + CoA + H(+). It participates in amino-acid degradation; L-arginine degradation via AST pathway; L-glutamate and succinate from L-arginine: step 1/5. Its function is as follows. Catalyzes the transfer of succinyl-CoA to arginine to produce N(2)-succinylarginine. The sequence is that of Arginine N-succinyltransferase from Shigella sonnei (strain Ss046).